The following is a 213-amino-acid chain: Alkylbase DNA glycosidase-like protein mag2 (213 aa).

DNA-binding residues include Lys-53, Leu-54, Ser-61, His-91, Gly-94, Ser-96, Lys-97, Lys-99, Glu-102, Lys-137, Gly-138, Lys-140, Thr-143, Ser-163, and Thr-164.

It belongs to the alkylbase DNA glycosidase AlkA family.

Its subcellular location is the nucleus. Its function is as follows. Alkylbase DNA glycosidase-like protein that shows no DNA glycosylase activity for alkylated bases. The molecular role of mag2 appears to be abasic (AP) site recognition and protection, while possibly facilitating damage signaling by structurally sculpting the DNA substrate. Stimulates AP site binding to mismatch repair protein mutS. In Schizosaccharomyces pombe (strain 972 / ATCC 24843) (Fission yeast), this protein is Alkylbase DNA glycosidase-like protein mag2.